The primary structure comprises 255 residues: 5'-nucleotidase SurE (255 aa).

Aspartate 8, aspartate 9, serine 40, and asparagine 93 together coordinate a divalent metal cation.

This sequence belongs to the SurE nucleotidase family. The cofactor is a divalent metal cation.

Its subcellular location is the cytoplasm. It catalyses the reaction a ribonucleoside 5'-phosphate + H2O = a ribonucleoside + phosphate. In terms of biological role, nucleotidase that shows phosphatase activity on nucleoside 5'-monophosphates. The sequence is that of 5'-nucleotidase SurE from Bradyrhizobium sp. (strain ORS 278).